Consider the following 466-residue polypeptide: Asparagine--tRNA ligase (466 aa).

The protein belongs to the class-II aminoacyl-tRNA synthetase family. In terms of assembly, homodimer.

Its subcellular location is the cytoplasm. The enzyme catalyses tRNA(Asn) + L-asparagine + ATP = L-asparaginyl-tRNA(Asn) + AMP + diphosphate + H(+). This chain is Asparagine--tRNA ligase, found in Colwellia psychrerythraea (strain 34H / ATCC BAA-681) (Vibrio psychroerythus).